A 76-amino-acid polypeptide reads, in one-letter code: Endothelin-1 (76 aa).

Residues 30–44 (CQCASQKDKKCWNFC) are endothelin-like.

This sequence belongs to the endothelin/sarafotoxin family.

The protein resides in the secreted. Endothelins are endothelium-derived vasoconstrictor peptides. Probable ligand for G-protein coupled receptors EDNRA and EDNRB which activates PTK2B, BCAR1, BCAR3 and, GTPases RAP1 and RHOA cascade in glomerular mesangial cells. Also binds the DEAR/FBXW7-AS1 receptor. Promotes mesenteric arterial wall remodeling via activation of ROCK signaling and subsequent colocalization of NFATC3 with F-actin filaments. NFATC3 then translocates to the nucleus where it subsequently promotes the transcription of the smooth muscle hypertrophy and differentiation marker ACTA2. This Macaca fascicularis (Crab-eating macaque) protein is Endothelin-1 (EDN1).